A 182-amino-acid chain; its full sequence is Protein SYM1 (182 aa).

3 consecutive transmembrane segments (helical) span residues 51–70 (TLRP…DKWY), 98–118 (LIFA…MEGG), and 135–155 (LLAN…LVPV).

Belongs to the peroxisomal membrane protein PXMP2/4 family.

The protein resides in the mitochondrion inner membrane. Its function is as follows. May be involved in cellular response to stress. Required to maintain mitochondrial DNA (mtDNA) integrity and stability. This is Protein SYM1 (SYM1) from Eremothecium gossypii (strain ATCC 10895 / CBS 109.51 / FGSC 9923 / NRRL Y-1056) (Yeast).